Reading from the N-terminus, the 232-residue chain is Uridylate kinase (232 aa).

ATP is bound at residue 13–14 (GS). A UMP-binding site is contributed by Gly-52. Positions 53 and 57 each coordinate ATP. UMP-binding positions include Asp-74 and 122–128 (LQPGQST). ATP contacts are provided by Thr-147, Tyr-153, and Asp-156.

It belongs to the UMP kinase family. Homohexamer.

Its subcellular location is the cytoplasm. It catalyses the reaction UMP + ATP = UDP + ADP. Its pathway is pyrimidine metabolism; CTP biosynthesis via de novo pathway; UDP from UMP (UMPK route): step 1/1. Its activity is regulated as follows. Inhibited by UTP. Functionally, catalyzes the reversible phosphorylation of UMP to UDP. The chain is Uridylate kinase from Thermofilum pendens (strain DSM 2475 / Hrk 5).